Reading from the N-terminus, the 432-residue chain is MFKPNYHFFPITGWMNDPNGLIFWKGKYHMFYQYNPRKPEWGNICWGHAVSDDLVHWRHLPVALYPDDETHGVFSGSAVEKDGKMFLVYTYYRDPTHNKGEKETQCVAMSENGLDFVKYDGNPVISKPPEEGTHAFRDPKVNRSNGEWRMVLGSGKDEKIGRVLLYTSDDLFHWKYEGVIFEDETTKEIECPDLVRIGEKDILIYSITSTNSVLFSMGELKEGKLNVEKRGLLDHGTDFYAAQTFFGTDRVVVIGWLQSWLRTGLYPTKREGWNGVMSLPRELYVENNELKVKPVDELLALRKRKVFETAKSGTFLLDVKENSYEIVCEFSGEIELRMGNESEEVVITKSRDELIVDTTRSGVSGGEVRKSTVEDEATNRIRAFLDSCSVEFFFNDSIAFSFRIHPENVYNILSVKSNQVKLEVFELENIWL.

Substrate contacts are provided by residues 14–17 (WMND), Q33, W41, 74–75 (FS), Y92, 137–138 (RD), 188–190 (EIE), T208, and W260. Residue D17 is part of the active site.

This sequence belongs to the glycosyl hydrolase 32 family.

It catalyses the reaction Hydrolysis of terminal non-reducing beta-D-fructofuranoside residues in beta-D-fructofuranosides.. Hydrolysis of sucrose, raffinose, inulin and levan. Specific for the fructose moiety and the beta-anomeric configuration of the glycosidic linkages of its substrates. The enzyme released fructose from sucrose and raffinose, and the fructose polymer inulin is hydrolyzed quantitatively in an exo-type fashion. This is Beta-fructosidase (bfrA) from Thermotoga maritima (strain ATCC 43589 / DSM 3109 / JCM 10099 / NBRC 100826 / MSB8).